Reading from the N-terminus, the 335-residue chain is HTH-type transcriptional regulator LacR (335 aa).

The region spanning 1 to 58 is the HTH lacI-type domain; that stretch reads MRTIKEIALESGYSPATVSRLLNNDPNLSITADTKNKILEIANKLGYWEDHQEKKIKP. Residues 4-23 constitute a DNA-binding region (H-T-H motif); that stretch reads IKEIALESGYSPATVSRLLN.

The protein operates within carbohydrate metabolism; lactose degradation [regulation]. Functionally, negatively regulates the transcription of the lactose utilization genes lacL and lacM. The sequence is that of HTH-type transcriptional regulator LacR (lacR) from Lactobacillus helveticus (Lactobacillus suntoryeus).